Reading from the N-terminus, the 193-residue chain is Peptide deformylase 2 (193 aa).

The Fe cation site is built by cysteine 100 and histidine 142. Glutamate 143 is a catalytic residue. Histidine 146 is a binding site for Fe cation.

Belongs to the polypeptide deformylase family. Fe(2+) is required as a cofactor.

The enzyme catalyses N-terminal N-formyl-L-methionyl-[peptide] + H2O = N-terminal L-methionyl-[peptide] + formate. Its function is as follows. Removes the formyl group from the N-terminal Met of newly synthesized proteins. Requires at least a dipeptide for an efficient rate of reaction. N-terminal L-methionine is a prerequisite for activity but the enzyme has broad specificity at other positions. This is Peptide deformylase 2 from Corynebacterium efficiens (strain DSM 44549 / YS-314 / AJ 12310 / JCM 11189 / NBRC 100395).